We begin with the raw amino-acid sequence, 179 residues long: Large ribosomal subunit protein uL6 (179 aa).

It belongs to the universal ribosomal protein uL6 family. Part of the 50S ribosomal subunit.

In terms of biological role, this protein binds to the 23S rRNA, and is important in its secondary structure. It is located near the subunit interface in the base of the L7/L12 stalk, and near the tRNA binding site of the peptidyltransferase center. The sequence is that of Large ribosomal subunit protein uL6 from Bacillus anthracis.